The following is a 401-amino-acid chain: Flagellin D (401 aa).

Belongs to the bacterial flagellin family.

Its subcellular location is the secreted. It localises to the bacterial flagellum. Flagellin is the subunit protein which polymerizes to form the filaments of bacterial flagella. The polypeptide is Flagellin D (flaD) (Rhizobium meliloti (strain 1021) (Ensifer meliloti)).